A 92-amino-acid polypeptide reads, in one-letter code: Small ribosomal subunit protein uS19 (92 aa).

The protein belongs to the universal ribosomal protein uS19 family.

Protein S19 forms a complex with S13 that binds strongly to the 16S ribosomal RNA. This Parvibaculum lavamentivorans (strain DS-1 / DSM 13023 / NCIMB 13966) protein is Small ribosomal subunit protein uS19.